The sequence spans 96 residues: Co-chaperonin GroES (96 aa).

It belongs to the GroES chaperonin family. In terms of assembly, heptamer of 7 subunits arranged in a ring. Interacts with the chaperonin GroEL.

The protein localises to the cytoplasm. Together with the chaperonin GroEL, plays an essential role in assisting protein folding. The GroEL-GroES system forms a nano-cage that allows encapsulation of the non-native substrate proteins and provides a physical environment optimized to promote and accelerate protein folding. GroES binds to the apical surface of the GroEL ring, thereby capping the opening of the GroEL channel. This Alcanivorax borkumensis (strain ATCC 700651 / DSM 11573 / NCIMB 13689 / SK2) protein is Co-chaperonin GroES.